The primary structure comprises 316 residues: Pantothenate kinase (316 aa).

95–102 lines the ATP pocket; that stretch reads GSVAVGKS.

It belongs to the prokaryotic pantothenate kinase family.

The protein localises to the cytoplasm. It carries out the reaction (R)-pantothenate + ATP = (R)-4'-phosphopantothenate + ADP + H(+). The protein operates within cofactor biosynthesis; coenzyme A biosynthesis; CoA from (R)-pantothenate: step 1/5. The protein is Pantothenate kinase of Shewanella baltica (strain OS195).